The sequence spans 239 residues: Large ribosomal subunit protein uL1 (239 aa).

Belongs to the universal ribosomal protein uL1 family. In terms of assembly, part of the 50S ribosomal subunit.

Its function is as follows. Binds directly to 23S rRNA. The L1 stalk is quite mobile in the ribosome, and is involved in E site tRNA release. In terms of biological role, protein L1 is also a translational repressor protein, it controls the translation of the L11 operon by binding to its mRNA. This Acidothermus cellulolyticus (strain ATCC 43068 / DSM 8971 / 11B) protein is Large ribosomal subunit protein uL1.